Reading from the N-terminus, the 771-residue chain is Transcription factor TAS2 (771 aa).

The segment at 33–53 (RSRAESASGPQQPSRRQPQTS) is disordered. Low complexity predominate over residues 42–51 (PQQPSRRQPQ). A DNA-binding region (zn(2)-C6 fungal-type) is located at residues 54-80 (CDLCRSRKIKCDRGTPCGNCRTRGLAC). The tract at residues 125-150 (AVGGSGNAENGAHGDATPRVPLSGLE) is disordered.

Its subcellular location is the nucleus. Functionally, transcription factor; part of the gene cluster that mediates the biosynthesis of the toxin tenuazonic acid (TeA), an inhibitor of protein biosynthesis on ribosomes by suppressing the release of new protein. Directly regulates the expression of the hybrid PKS-NRPS synthetase TAS1 and the subsequent production of TeA. The polypeptide is Transcription factor TAS2 (Pyricularia oryzae (strain 70-15 / ATCC MYA-4617 / FGSC 8958) (Rice blast fungus)).